Reading from the N-terminus, the 93-residue chain is UPF0367 protein ssl1972 (93 aa).

This sequence belongs to the UPF0367 family.

The chain is UPF0367 protein ssl1972 from Synechocystis sp. (strain ATCC 27184 / PCC 6803 / Kazusa).